The chain runs to 521 residues: Probable xyloglucan galactosyltransferase GT14 (521 aa).

Residues 1-30 lie on the Cytoplasmic side of the membrane; it reads MRPKNYSQMEKPISITTGKFRTNNNNNHNN. A helical; Signal-anchor for type II membrane protein transmembrane segment spans residues 31–51; the sequence is VWFVVPLFFILCFVLLCFDYS. Residues 52–521 lie on the Lumenal side of the membrane; sequence ALFTDTDETA…SPYEEPQVLA (470 aa). Positions 72 to 92 are disordered; sequence TSSEFTKDDNFSRFPDDPSPD. A compositionally biased stretch (basic and acidic residues) spans 76–87; that stretch reads FTKDDNFSRFPD. N-linked (GlcNAc...) asparagine glycans are attached at residues Asn81, Asn177, Asn203, Asn249, Asn265, and Asn411. The disordered stretch occupies residues 492 to 521; it reads RQGKDGSDGFDDRDDYKYTFSPYEEPQVLA.

It belongs to the glycosyltransferase 47 family. As to expression, expressed in roots, hypocotyls, cotyledons, leaves, stems, stamens and carpels.

The protein resides in the golgi apparatus membrane. Functions in xyloglucan synthesis by adding side chains to the xylosylated glucan backbone. Involved in the galactosylation of hemicellulose xyloglucan. The sequence is that of Probable xyloglucan galactosyltransferase GT14 from Arabidopsis thaliana (Mouse-ear cress).